Reading from the N-terminus, the 150-residue chain is Large ribosomal subunit protein uL15 (150 aa).

Residues 1–55 are disordered; that stretch reads MADNEILQMHDLKPAPGAKKDRTRVGRGEGSKGKTAGRGAKGQTKRNHVRPGFEG. Over residues 8–32 the composition is skewed to basic and acidic residues; that stretch reads QMHDLKPAPGAKKDRTRVGRGEGSK.

It belongs to the universal ribosomal protein uL15 family. As to quaternary structure, part of the 50S ribosomal subunit.

Binds to the 23S rRNA. The sequence is that of Large ribosomal subunit protein uL15 from Bifidobacterium longum (strain DJO10A).